Reading from the N-terminus, the 182-residue chain is Troponin I, fast skeletal muscle (182 aa).

At Gly-2 the chain carries N-acetylglycine. The involved in binding TNC stretch occupies residues 2–48; sequence GDEEKRNRAITARRQHLKSVMLQIAATELEKEESRRESEKENYLSEH. Thr-12 bears the Phosphothreonine mark. A compositionally biased stretch (basic and acidic residues) spans 29 to 45; it reads ELEKEESRRESEKENYL. Residues 29–53 form a disordered region; it reads ELEKEESRRESEKENYLSEHCPPLH. The interval 97–117 is involved in binding TNC and actin; sequence NQKLFDLRGKFKRPPLRRVRM. The residue at position 118 (Ser-118) is a Phosphoserine.

Belongs to the troponin I family. Binds to actin and tropomyosin.

Functionally, troponin I is the inhibitory subunit of troponin, the thin filament regulatory complex which confers calcium-sensitivity to striated muscle actomyosin ATPase activity. In Mus musculus (Mouse), this protein is Troponin I, fast skeletal muscle (Tnni2).